The primary structure comprises 447 residues: Kynurenine 3-monooxygenase (447 aa).

The protein belongs to the aromatic-ring hydroxylase family. KMO subfamily. FAD serves as cofactor.

The enzyme catalyses L-kynurenine + NADPH + O2 + H(+) = 3-hydroxy-L-kynurenine + NADP(+) + H2O. It functions in the pathway cofactor biosynthesis; NAD(+) biosynthesis; quinolinate from L-kynurenine: step 1/3. In terms of biological role, catalyzes the hydroxylation of L-kynurenine (L-Kyn) to form 3-hydroxy-L-kynurenine (L-3OHKyn). Required for synthesis of quinolinic acid. This chain is Kynurenine 3-monooxygenase, found in Christiangramia forsetii (strain DSM 17595 / CGMCC 1.15422 / KT0803) (Gramella forsetii).